Reading from the N-terminus, the 107-residue chain is Iron-binding protein IscA (107 aa).

Positions 35, 99, and 101 each coordinate Fe cation.

The protein belongs to the HesB/IscA family. As to quaternary structure, homodimer; may form tetramers and higher multimers. Fe cation is required as a cofactor.

Its function is as follows. Is able to transfer iron-sulfur clusters to apo-ferredoxin. Multiple cycles of [2Fe2S] cluster formation and transfer are observed, suggesting that IscA acts catalytically. Recruits intracellular free iron so as to provide iron for the assembly of transient iron-sulfur cluster in IscU in the presence of IscS, L-cysteine and the thioredoxin reductase system TrxA/TrxB. The protein is Iron-binding protein IscA of Serratia proteamaculans (strain 568).